A 261-amino-acid chain; its full sequence is Probable enoyl-CoA hydratase EchA17 (261 aa).

This sequence belongs to the enoyl-CoA hydratase/isomerase family.

The catalysed reaction is a (3S)-3-hydroxyacyl-CoA = a (2E)-enoyl-CoA + H2O. It carries out the reaction a 4-saturated-(3S)-3-hydroxyacyl-CoA = a (3E)-enoyl-CoA + H2O. Its function is as follows. Could possibly oxidize fatty acids using specific components. This chain is Probable enoyl-CoA hydratase EchA17 (echA17), found in Mycobacterium bovis (strain BCG / Pasteur 1173P2).